A 122-amino-acid chain; its full sequence is Large ribosomal subunit protein bL12 (122 aa).

It belongs to the bacterial ribosomal protein bL12 family. In terms of assembly, homodimer. Part of the ribosomal stalk of the 50S ribosomal subunit. Forms a multimeric L10(L12)X complex, where L10 forms an elongated spine to which 2 to 4 L12 dimers bind in a sequential fashion. Binds GTP-bound translation factors.

Forms part of the ribosomal stalk which helps the ribosome interact with GTP-bound translation factors. Is thus essential for accurate translation. In Flavobacterium psychrophilum (strain ATCC 49511 / DSM 21280 / CIP 103535 / JIP02/86), this protein is Large ribosomal subunit protein bL12.